Consider the following 260-residue polypeptide: Adenosylcobinamide-GDP ribazoletransferase (260 aa).

7 helical membrane passes run 31–51 (FYFLPLIGGLIAGLVLIPIYF), 57–77 (IEISGFISLLLYLFLTGSIHL), 108–128 (YGTIGLNVFLLLRYINYSTII), 131–151 (AGLLILAGIISRLSGLAVVVF), 173–193 (FFFWLVLVCFLSLFTPEIAAF), 206–226 (LKYLLLPLTAFILTFIIIRIS), and 240–260 (LIVELTELAVLSTSFFINVHL).

Belongs to the CobS family. It depends on Mg(2+) as a cofactor.

It is found in the cell inner membrane. It catalyses the reaction alpha-ribazole + adenosylcob(III)inamide-GDP = adenosylcob(III)alamin + GMP + H(+). The enzyme catalyses alpha-ribazole 5'-phosphate + adenosylcob(III)inamide-GDP = adenosylcob(III)alamin 5'-phosphate + GMP + H(+). It functions in the pathway cofactor biosynthesis; adenosylcobalamin biosynthesis; adenosylcobalamin from cob(II)yrinate a,c-diamide: step 7/7. Joins adenosylcobinamide-GDP and alpha-ribazole to generate adenosylcobalamin (Ado-cobalamin). Also synthesizes adenosylcobalamin 5'-phosphate from adenosylcobinamide-GDP and alpha-ribazole 5'-phosphate. The protein is Adenosylcobinamide-GDP ribazoletransferase of Treponema denticola (strain ATCC 35405 / DSM 14222 / CIP 103919 / JCM 8153 / KCTC 15104).